The sequence spans 250 residues: Octanoyltransferase (250 aa).

The region spanning 44-224 (GAGSDRLLLL…AVVQALNGDL (181 aa)) is the BPL/LPL catalytic domain. Substrate is bound by residues 82–89 (RGGKITWH), 154–156 (AIG), and 167–169 (GIS). Cys185 acts as the Acyl-thioester intermediate in catalysis. Residues 224–250 (LPVRDHDLPRPGTTPAAPNSTRVRSMT) are disordered. Positions 239-250 (AAPNSTRVRSMT) are enriched in polar residues.

This sequence belongs to the LipB family.

It localises to the cytoplasm. The enzyme catalyses octanoyl-[ACP] + L-lysyl-[protein] = N(6)-octanoyl-L-lysyl-[protein] + holo-[ACP] + H(+). Its pathway is protein modification; protein lipoylation via endogenous pathway; protein N(6)-(lipoyl)lysine from octanoyl-[acyl-carrier-protein]: step 1/2. Catalyzes the transfer of endogenously produced octanoic acid from octanoyl-acyl-carrier-protein onto the lipoyl domains of lipoate-dependent enzymes. Lipoyl-ACP can also act as a substrate although octanoyl-ACP is likely to be the physiological substrate. This is Octanoyltransferase from Nocardia farcinica (strain IFM 10152).